The sequence spans 479 residues: MNFETIIGLEVHVELNTNSKIFSPSSAHFGEDPNASTNVIDWSFPGVLPVMNKGVIDAGIKAALALNMSIHQHMHFDRKNYFYPDNPKAYQISQFDEPIGYNGWIDITLEDGSTKKIRIERAHLEEDAGKNTHGTDGYSYVDLNRQGVPLIEIVSEADMRSPEEAYAYLTALKEIIQYTGISDVKMEEGSMRVDANISLRPYGQEAFGTKTELKNLNSFSNVRKGLEFEVERQAKILRSGGVIRQETRRYDEASKGTILMRVKEGAADYRYFPEPDLPLFEIDDAWIEDMRAELPRFPAERRVSYIKDLGLSAYDAGQLTATKALSDFFEQAVALGGDAKQVSNWLQGEVAQFLNAEGKTIDQLALTPDSLVEMIAIIADGTISSKIAKKVFVHLAKHGGSARAYVEKAGLVQISDPAVLIPIIHQVFADNEAAVADFKSGKRNADKAFTGFLMKATKGQANPQIAQQLLAQELQKLLD.

This sequence belongs to the GatB/GatE family. GatB subfamily. As to quaternary structure, heterotrimer of A, B and C subunits.

It carries out the reaction L-glutamyl-tRNA(Gln) + L-glutamine + ATP + H2O = L-glutaminyl-tRNA(Gln) + L-glutamate + ADP + phosphate + H(+). The enzyme catalyses L-aspartyl-tRNA(Asn) + L-glutamine + ATP + H2O = L-asparaginyl-tRNA(Asn) + L-glutamate + ADP + phosphate + 2 H(+). Functionally, allows the formation of correctly charged Asn-tRNA(Asn) or Gln-tRNA(Gln) through the transamidation of misacylated Asp-tRNA(Asn) or Glu-tRNA(Gln) in organisms which lack either or both of asparaginyl-tRNA or glutaminyl-tRNA synthetases. The reaction takes place in the presence of glutamine and ATP through an activated phospho-Asp-tRNA(Asn) or phospho-Glu-tRNA(Gln). This chain is Aspartyl/glutamyl-tRNA(Asn/Gln) amidotransferase subunit B, found in Streptococcus equi subsp. zooepidemicus (strain MGCS10565).